Consider the following 146-residue polypeptide: Regulator of ribonuclease activity B (146 aa).

The interval 110–146 (WGTYFEDPDGEEEEGDEFDQDDEDGPADRDEVPATRH) is disordered. Acidic residues predominate over residues 115 to 134 (EDPDGEEEEGDEFDQDDEDG). Over residues 135–146 (PADRDEVPATRH) the composition is skewed to basic and acidic residues.

Belongs to the RraB family. As to quaternary structure, interacts with the C-terminal region of Rne.

Its subcellular location is the cytoplasm. In terms of biological role, globally modulates RNA abundance by binding to RNase E (Rne) and regulating its endonucleolytic activity. Can modulate Rne action in a substrate-dependent manner by altering the composition of the degradosome. This chain is Regulator of ribonuclease activity B, found in Sodalis glossinidius (strain morsitans).